Consider the following 778-residue polypeptide: MEKFGMNFGGGPSKKDLLETIETQKKQLLQYQARLKDVVRAYKSLLKEKEALEASIKVLSVSHEADVGLSGVQPPGLTFPDSVDDRCSTHSEDSTGTATSLDTAASLTSVKGEFGVEDDRAARGPLPPKSEEASGSESGVSSSSGDGPSAGSEMDKRVHQLKTQLATLTSSLATVTQEKSRMEASYLADKKKMKQDLEDANKKAEEERGRLEGDLKVLQEQIAETKARLITQQHDRAQEQSDHALMLRELQKLLQEERTQRQDLELRLEETREALAGRAYAADQVEGFELQTKQLTREVEELKGELQTIRDEKNRPDPRLQELQQEAARLKSHFQAQLQQEMRKTALAEDQLRQQSQVEEQRVAALESQISEVSELLGTYEKAKQKDQLAIQKLKERLLQLDLENKTLALAASSRSSLDIHGDESSLDINVLKDKMEKLKKLLQVAARKSQVTLDVEKLCDPEIMANSEAADGEKATALYYQQELKQLKEEFERYKMRAQVVLKSKNTKDGSLGKELEAAQEQLAELKDKYISLRLSCEELESQHQQEAEDWKQELARLQQLHRQELERSQLDFRDRTLKLEEELHKQRDRALAVLAEKDLELEQLRSVALSSGLPGRRSPVGGVGGGGLGDPADTASSDSLTQALQLAAANEPTFFLYAEQLARKEVEITSLRKQKHRLEVEAHQLQERLLEEGERHREEVGALQSHIEKNMRDQSREGANLEYLKNIIYRFLTLPDSLGRQQTLTAILTILHFSPEEKQVLMRLPSGGSWWPSGKR.

A coiled-coil region spans residues Ser13 to Val61. Disordered regions lie at residues Ser70–Arg157, Tyr186–Arg208, and Gly617–Ser638. Residues Val83–Asp93 show a composition bias toward basic and acidic residues. Composition is skewed to low complexity over residues Ser94–Ser109 and Ala133–Ser152. Positions Ser152 to Val702 form a coiled coil. In terms of domain architecture, GRIP spans Gln716–Leu766.

The protein resides in the cytoplasm. Its subcellular location is the golgi apparatus membrane. Functionally, probably involved in maintaining Golgi structure. The polypeptide is GRIP and coiled-coil domain-containing protein 1 (Gcc1) (Mus musculus (Mouse)).